The chain runs to 2603 residues: Ankyrin repeat domain-containing protein 17 (2603 aa).

The residue at position 1 (methionine 1) is an N-acetylmethionine. Low complexity predominate over residues 1-32 (MEKATVPAAAEGEGSPPAAAAVAAPPAAAAAE). The disordered stretch occupies residues 1 to 127 (MEKATVPAAA…DDDEEEEVSE (127 aa)). 2 positions are modified to phosphoserine: serine 15 and serine 42. Over residues 68–77 (PHHKAKRNRT) the composition is skewed to basic residues. Low complexity predominate over residues 82–92 (SSSESSSDSDN). Residues 93–107 (SGGGGGGGGGGGGGT) are compositionally biased toward gly residues. Acidic residues predominate over residues 112–127 (SEEEEDDDDEEEEVSE). Phosphoserine is present on serine 152. ANK repeat units follow at residues 229–258 (SDNR…SVNE), 262–291 (EGES…NVED), 296–325 (GDIT…DVNA), 329–358 (TGNT…SIED), 362–391 (NGHT…GINT), 396–425 (FKES…DQEH), 429–458 (EMHT…QVNM), 462–491 (SFES…SLEE), 495–524 (EGYT…NINA), 529–558 (TQET…DIEL), 559–588 (GCST…NVHA), 592–621 (TGDT…DLEH), 625–654 (GGRT…NVNR), 659–688 (NDHT…DPTH), and 692–721 (DGST…NLLA). Residue lysine 314 forms a Glycyl lysine isopeptide (Lys-Gly) (interchain with G-Cter in SUMO2) linkage. The disordered stretch occupies residues 770 to 792 (VRSKAASKQKSNSHLPANSQDVQ). The segment covering 775-792 (ASKQKSNSHLPANSQDVQ) has biased composition (polar residues). Serine 799 carries the post-translational modification Phosphoserine. ANK repeat units follow at residues 1078–1107 (NHDT…SIEH), 1111–1140 (KGFT…DIEA), 1145–1174 (TKDT…NKEH), 1178–1207 (SDYT…EINS), 1213–1242 (LGIS…DINA), 1247–1276 (NRNT…NVEH), 1280–1309 (TGLT…DVNA), 1315–1344 (SRDT…HIDV), 1348–1377 (KGNT…DVDA), and 1381–1410 (RKIT…QFPS). Residues 1438–1522 (VQAKDRQAAE…EKEKLKVEEE (85 aa)) adopt a coiled-coil conformation. Position 1453 is a phosphoserine (serine 1453). Disordered stretches follow at residues 1475–1496 (AKRE…RKLE) and 1513–1713 (EKEK…PKRE). Positions 1477 to 1487 (REKRKEKRRKK) are enriched in basic residues. Composition is skewed to low complexity over residues 1526–1546 (LTEP…TWTT), 1598–1607 (ESKSSSTSES), and 1616–1636 (SSCS…NHAS). Serine 1631 is subject to Phosphoserine. 2 stretches are compositionally biased toward polar residues: residues 1638–1648 (VVTTTMASKKQ) and 1671–1699 (LSET…SPNG). Serine 1692, serine 1696, and serine 1705 each carry phosphoserine. The region spanning 1721–1785 (RRSKKVSVPS…ESTRQATQLI (65 aa)) is the KH domain. Arginine 1870 is modified (asymmetric dimethylarginine). 3 disordered regions span residues 1902-1991 (PRLP…PSVR), 2007-2195 (TTVT…SSSA), and 2269-2327 (VSSQ…YGSV). 2 stretches are compositionally biased toward low complexity: residues 1946-1989 (SNQN…SSPS) and 2007-2024 (TTVT…TNAT). Phosphoserine occurs at positions 2038, 2040, 2041, 2043, 2055, and 2063. Low complexity-rich tracts occupy residues 2068-2077 (ASASEQEASS), 2087-2108 (RPPH…QQPP), and 2175-2189 (PPSH…TPAP). Polar residues predominate over residues 2269-2298 (VSSQSTPESMLSGKSSYLPNSDPLHQSDTS). Residues 2303 to 2313 (FRPPLQRPAPS) are compositionally biased toward pro residues. Position 2373 is a phosphoserine (serine 2373). The tract at residues 2378–2447 (LTPCSSASNE…TGTSAPSVIG (70 aa)) is disordered. A compositionally biased stretch (polar residues) spans 2379–2391 (TPCSSASNESPAQ). Over residues 2392-2411 (SVSSGVRAPSPAPSSVPLGS) the composition is skewed to low complexity. Position 2401 is a phosphoserine (serine 2401). Polar residues predominate over residues 2435–2447 (IRQTGTSAPSVIG).

In terms of assembly, interacts (via N-terminus) with NOD2. Interacts with CDK2, MCM3, MCM5, MCM7, CDC6 and PCNA. Interacts with MAVS and IFIH1. Interacts (via the second ankyrin repeat cluster) with RIGI. Phosphorylated by CDK2. In terms of tissue distribution, highly expressed in fetal liver. Detected in adult liver cells, ovarian oocytes, seminiferous tubules of the testes and pelvic region of the kidney. It was not detected in heart, gut, lung, spleen and skeletal muscle. Earliest specific in situ marker of hepatic differentiation during embryogenesis, useful for characterization of inductive events involved in hepatic specification.

It is found in the cytoplasm. The protein localises to the nucleus. Its function is as follows. Could play pivotal roles in cell cycle and DNA regulation. Involved in innate immune defense against viruse by positively regulating the viral dsRNA receptors RIGI and IFIH1 signaling pathways. Involves in NOD2- and NOD1-mediated responses to bacteria suggesting a role in innate antibacterial immune pathways too. Could play a central role for the formation and/or maintenance of the blood vessels of the circulation system. The polypeptide is Ankyrin repeat domain-containing protein 17 (Ankrd17) (Mus musculus (Mouse)).